The sequence spans 637 residues: GTP-binding protein 4 (637 aa).

Alanine 2 carries the N-acetylalanine modification. The residue at position 103 (lysine 103) is an N6-acetyllysine; alternate. A Glycyl lysine isopeptide (Lys-Gly) (interchain with G-Cter in SUMO2); alternate cross-link involves residue lysine 103. Serine 122 is subject to Phosphoserine. Residues 169–340 (RTLLLCGYPN…VKTEACDRLL (172 aa)) enclose the OBG-type G domain. GTP-binding positions include 175–182 (GYPNVGKS), 221–225 (DTPGI), and 289–292 (SKCE). A Glycyl lysine isopeptide (Lys-Gly) (interchain with G-Cter in SUMO2) cross-link involves residue lysine 332. 2 disordered regions span residues 499–518 (SKEK…KVQR) and 525–637 (MRSL…KERR). A Glycyl lysine isopeptide (Lys-Gly) (interchain with G-Cter in SUMO2) cross-link involves residue lysine 535. Positions 542–555 (VRARRSRSVTRKRK) are enriched in basic residues. Serine 559 carries the phosphoserine modification. Residues 563–574 (SSIARSRSRSCS) are compositionally biased toward low complexity. The segment covering 576–588 (TPRDVSGLRDVKM) has biased composition (basic and acidic residues). Basic residues predominate over residues 589–607 (VKKAKTMMKKAQKKMNRLG). Positions 608-621 (KKGEADRHVFDMKP) are enriched in basic and acidic residues. A compositionally biased stretch (basic residues) spans 622–637 (KHLLSGKRKAGKKERR).

Belongs to the TRAFAC class OBG-HflX-like GTPase superfamily. OBG GTPase family. NOG subfamily. In terms of assembly, associates with pre-60S ribosomal particles. Interacts with MINAS-60 (product of an alternative open reading frame of RBM10).

It is found in the nucleus. It localises to the nucleolus. Involved in the biogenesis of the 60S ribosomal subunit. Acts as TP53 repressor, preventing TP53 stabilization and cell cycle arrest. The protein is GTP-binding protein 4 (Gtpbp4) of Rattus norvegicus (Rat).